Here is a 359-residue protein sequence, read N- to C-terminus: 3-dehydroquinate synthase (359 aa).

Residues aspartate 70–lysine 75, glycine 104–aspartate 108, threonine 128–threonine 129, lysine 141, and lysine 150 each bind NAD(+). Zn(2+)-binding residues include glutamate 183, histidine 246, and histidine 262.

This sequence belongs to the sugar phosphate cyclases superfamily. Dehydroquinate synthase family. Co(2+) is required as a cofactor. Requires Zn(2+) as cofactor. NAD(+) serves as cofactor.

It localises to the cytoplasm. It catalyses the reaction 7-phospho-2-dehydro-3-deoxy-D-arabino-heptonate = 3-dehydroquinate + phosphate. It functions in the pathway metabolic intermediate biosynthesis; chorismate biosynthesis; chorismate from D-erythrose 4-phosphate and phosphoenolpyruvate: step 2/7. Functionally, catalyzes the conversion of 3-deoxy-D-arabino-heptulosonate 7-phosphate (DAHP) to dehydroquinate (DHQ). This chain is 3-dehydroquinate synthase, found in Mycolicibacterium vanbaalenii (strain DSM 7251 / JCM 13017 / BCRC 16820 / KCTC 9966 / NRRL B-24157 / PYR-1) (Mycobacterium vanbaalenii).